Reading from the N-terminus, the 107-residue chain is MTELTLSDLEQIVATRAGAAPEDSWTAKLVAAGQPKAAKKLGEEAVETVIAAVSGDRKNLIDESADLLYHLMVVLNIAAVPLQDVMSELARRTSQSGLQEKANRQNP.

The protein belongs to the PRA-PH family.

The protein localises to the cytoplasm. It carries out the reaction 1-(5-phospho-beta-D-ribosyl)-ATP + H2O = 1-(5-phospho-beta-D-ribosyl)-5'-AMP + diphosphate + H(+). It functions in the pathway amino-acid biosynthesis; L-histidine biosynthesis; L-histidine from 5-phospho-alpha-D-ribose 1-diphosphate: step 2/9. This Sinorhizobium fredii (strain NBRC 101917 / NGR234) protein is Phosphoribosyl-ATP pyrophosphatase.